Consider the following 369-residue polypeptide: Nuclear hormone receptor family member nhr-64 (369 aa).

The nuclear receptor DNA-binding region spans 67–142 (EKCQVDKAKR…ASTRGLRTTV (76 aa)). 2 consecutive NR C4-type zinc fingers follow at residues 70-90 (QVDK…CLRK) and 106-130 (PANP…TLIR). Positions 120–352 (PDDPLLDTLI…NLMLELMLPN (233 aa)) constitute an NR LBD domain.

It belongs to the nuclear hormone receptor family.

It is found in the nucleus. Orphan nuclear receptor. The polypeptide is Nuclear hormone receptor family member nhr-64 (nhr-64) (Caenorhabditis elegans).